The chain runs to 365 residues: Ribosomal RNA large subunit methyltransferase M (365 aa).

S-adenosyl-L-methionine-binding positions include serine 188, 221 to 224, aspartate 240, aspartate 260, and aspartate 277; that span reads CPGG. The active-site Proton acceptor is the lysine 306.

This sequence belongs to the class I-like SAM-binding methyltransferase superfamily. RNA methyltransferase RlmE family. RlmM subfamily. In terms of assembly, monomer.

The protein localises to the cytoplasm. The enzyme catalyses cytidine(2498) in 23S rRNA + S-adenosyl-L-methionine = 2'-O-methylcytidine(2498) in 23S rRNA + S-adenosyl-L-homocysteine + H(+). Catalyzes the 2'-O-methylation at nucleotide C2498 in 23S rRNA. This chain is Ribosomal RNA large subunit methyltransferase M, found in Proteus mirabilis (strain HI4320).